The following is a 469-amino-acid chain: Histone chaperone rtt-106 (469 aa).

2 disordered regions span residues 54–73 (EEPA…PNGA) and 364–469 (MAEQ…EGEE). Composition is skewed to basic and acidic residues over residues 364 to 379 (MAEQ…ENAK) and 402 to 415 (ELER…QRLQ). Acidic residues-rich tracts occupy residues 416 to 433 (DEED…EGES) and 440 to 469 (SEEE…EGEE).

It belongs to the RTT106 family. As to quaternary structure, interacts with histones H3 and H4.

It is found in the nucleus. Its subcellular location is the chromosome. In terms of biological role, histones H3 and H4 chaperone involved in the nucleosome formation and heterochromatin silencing. Required for the deposition of H3K56ac-carrying H3-H4 complex onto newly-replicated DNA. Plays a role in the transcriptional regulation of the cell-cycle dependent histone genes by creating a repressive structure at the core histone gene promoter. This Neurospora crassa (strain ATCC 24698 / 74-OR23-1A / CBS 708.71 / DSM 1257 / FGSC 987) protein is Histone chaperone rtt-106 (rtt-106).